Here is a 344-residue protein sequence, read N- to C-terminus: Heat-inducible transcription repressor HrcA (344 aa).

This sequence belongs to the HrcA family.

Its function is as follows. Negative regulator of class I heat shock genes (grpE-dnaK-dnaJ and groELS operons). Prevents heat-shock induction of these operons. This Desulforudis audaxviator (strain MP104C) protein is Heat-inducible transcription repressor HrcA.